We begin with the raw amino-acid sequence, 654 residues long: Marinolic acid--CoA ligase (654 aa).

The protein belongs to the ATP-dependent AMP-binding enzyme family.

It carries out the reaction ATP + a marinolic acid + CoA = AMP + diphosphate + a marinoloyl-CoA.. The enzyme catalyses ATP + a pseudomonic acid + CoA = AMP + diphosphate + a pseudomonoyl-CoA.. It catalyses the reaction marinolate C + ATP + CoA = marinoloyl-CoA C + AMP + diphosphate. The catalysed reaction is pseudomonate C + ATP + CoA = pseudomonoyl-CoA C + AMP + diphosphate. The protein operates within antibiotic biosynthesis. Acyl-CoA ligase that catalyzes the CoA acylation of pseudomonate C, leading to the formation of pseudomonoyl-CoA C (PAC-CoA). Also shows high activity with pseudomonoyl-CoA A as substrate. In addition, can activate acetic, octanoic, 2,4-dodecadienoic and 2,4-decadienoic acids, although with much lower activity. In vivo, is probably involved in the biosynthesis of thiomarinol, a naturally occurring double-headed antibiotic. The protein is Marinolic acid--CoA ligase of Pseudoalteromonas sp. (strain SANK 73390).